The chain runs to 914 residues: DNA mismatch repair protein MutS (914 aa).

The tract at residues 1 to 25 (MDKKNDHKNNLIPQPASSFASSQER) is disordered. The span at 11–25 (LIPQPASSFASSQER) shows a compositional bias: polar residues. 662–669 (GPNMGGKS) is a binding site for ATP.

This sequence belongs to the DNA mismatch repair MutS family.

Its function is as follows. This protein is involved in the repair of mismatches in DNA. It is possible that it carries out the mismatch recognition step. This protein has a weak ATPase activity. This chain is DNA mismatch repair protein MutS, found in Bartonella tribocorum (strain CIP 105476 / IBS 506).